A 300-amino-acid chain; its full sequence is Ribosomal RNA small subunit methyltransferase H (300 aa).

Residues 38–40 (GGH), E55, I85, D102, and H109 each bind S-adenosyl-L-methionine.

This sequence belongs to the methyltransferase superfamily. RsmH family.

It is found in the cytoplasm. The catalysed reaction is cytidine(1402) in 16S rRNA + S-adenosyl-L-methionine = N(4)-methylcytidine(1402) in 16S rRNA + S-adenosyl-L-homocysteine + H(+). Functionally, specifically methylates the N4 position of cytidine in position 1402 (C1402) of 16S rRNA. This chain is Ribosomal RNA small subunit methyltransferase H, found in Brachyspira hyodysenteriae (strain ATCC 49526 / WA1).